The primary structure comprises 342 residues: Hydrogenase expression/formation protein HupV (342 aa).

This sequence belongs to the HupK family.

The chain is Hydrogenase expression/formation protein HupV (hupV) from Azotobacter chroococcum mcd 1.